We begin with the raw amino-acid sequence, 201 residues long: Prostamide/prostaglandin F synthase (201 aa).

The residue at position 108 (Y108) is a Phosphotyrosine.

The protein belongs to the peroxiredoxin-like PRXL2 family. Prostamide/prostaglandin F synthase subfamily.

It is found in the cytoplasm. It localises to the cytosol. The catalysed reaction is prostaglandin H2 + [thioredoxin]-dithiol = prostaglandin F2alpha + [thioredoxin]-disulfide. It catalyses the reaction prostamide F2alpha + [thioredoxin]-disulfide = prostamide H2 + [thioredoxin]-dithiol. In terms of biological role, catalyzes the reduction of prostaglandin-ethanolamide H(2) (prostamide H(2)) to prostamide F(2alpha) with NADPH as proton donor. Also able to reduce prostaglandin H(2) to prostaglandin F(2alpha). This Bos taurus (Bovine) protein is Prostamide/prostaglandin F synthase (PRXL2B).